The following is a 300-amino-acid chain: Solute carrier family 25 member 35 (300 aa).

Solcar repeat units lie at residues 1-90 (MDFL…AEAG), 100-193 (HSPA…TKDL), and 203-294 (QSWK…LRSL). Transmembrane regions (helical) follow at residues 38 to 58 (TYQR…KVDG), 59 to 79 (LAAL…MNGI), 91 to 119 (GYLH…GAYL), 169 to 190 (ALGG…FSST), 205 to 225 (WKLA…AMAP), and 277 to 300 (LGPH…TDTK).

This sequence belongs to the mitochondrial carrier (TC 2.A.29) family.

The protein resides in the mitochondrion inner membrane. The enzyme catalyses a dicarboxylate(in) + sulfate(out) = a dicarboxylate(out) + sulfate(in). Functionally, putative antiporter that exchanges dicarboxylates and sulfur oxoanions across the inner membrane of mitochondria. In Homo sapiens (Human), this protein is Solute carrier family 25 member 35 (SLC25A35).